The following is a 449-amino-acid chain: Putative F-box/FBD/LRR-repeat protein At5g62970 (449 aa).

An F-box domain is found at Asp-2–Asp-50. LRR repeat units lie at residues Thr-27 to Met-52, Gly-81 to Phe-107, Thr-158 to Arg-185, Val-186 to Leu-211, Tyr-252 to Ala-279, and Ile-328 to Glu-354. Residues Phe-368–Ile-418 form the FBD domain.

The sequence is that of Putative F-box/FBD/LRR-repeat protein At5g62970 from Arabidopsis thaliana (Mouse-ear cress).